The chain runs to 872 residues: MLTAKETRDSFKNFFESKGHQIVPSAPMVIKDDPTLMFTNAGMNQFKDIILGNHPAKYHRVADSQKCLRVSGKHNDLEEVGHDTYHHTMFEMLGNWSFGDYFKKEAISWAWEYLVDVLKLNPEHLYATVFEGSPEEGLERDNEAASYWEQYLPKDHIINGNKHDNFWEMGDTGPCGPCSEIHIDLRPAEERAKISGRDLVNHDHPQVIEIWNLVFMQYNRKADSTLEPLPAKVIDTGMGFERLCMALQGKTSNYDTDVFQPLIKAIAQMAGTEYGKNEQNDIAMRVIADHIRTIAFSITDGQLPSNAKAGYVIRRILRRAVRYGYTFLGQKQAFMYKLLPVLIDSMGDAYPELIAQKELIEKVIKEEEESFLRTLETGIRLLDKTMADTKANGKTEISGKDAFTLYDTFGFPLDLTELILRENGMTVNVEEFDAEMQQQKQRARNAAAIETGDWIILKEGTTEFVGYDYTEYETSILRYRQVKQKNQTLYQIVLDYTPFYAESGGQVGDTGVLVNEFETIEVIDTKKENNLPIHITKKLPEHPEAPMMACVDTDKRAACAANHSATHLLDEALREVLGEHVEQKGSLVTPDSLRFDFSHFQKVTDEELRKVEHLVNAKIRANVPLQEHRNIPIEEAKELGAIALFGEKYGDHVRVIQFGSSIEFCGGTHVAATGNIGMVKIISESSVAAGVRRIEAYTGARVEEMLDTIQDTLSDLKALFNNTPDLGVAIRKYIDENAGLKKQVEDFMKEKEAAVKERLLKNVQEINGIKVIKFCLPMPAEVVKNIAFQLRGEITENLFFVAGTVDANKPMLTVMISDNLVAGGLKAGNLVKEAAKLIQGGGGGQPHFATAGGKNPDGLNAAVEKVLELAGI.

Zn(2+) is bound by residues His-563, His-567, Cys-665, and His-669.

This sequence belongs to the class-II aminoacyl-tRNA synthetase family. Requires Zn(2+) as cofactor.

The protein resides in the cytoplasm. It catalyses the reaction tRNA(Ala) + L-alanine + ATP = L-alanyl-tRNA(Ala) + AMP + diphosphate. In terms of biological role, catalyzes the attachment of alanine to tRNA(Ala) in a two-step reaction: alanine is first activated by ATP to form Ala-AMP and then transferred to the acceptor end of tRNA(Ala). Also edits incorrectly charged Ser-tRNA(Ala) and Gly-tRNA(Ala) via its editing domain. The chain is Alanine--tRNA ligase from Bacteroides fragilis (strain ATCC 25285 / DSM 2151 / CCUG 4856 / JCM 11019 / LMG 10263 / NCTC 9343 / Onslow / VPI 2553 / EN-2).